We begin with the raw amino-acid sequence, 345 residues long: S-adenosylmethionine:tRNA ribosyltransferase-isomerase (345 aa).

It belongs to the QueA family. As to quaternary structure, monomer.

Its subcellular location is the cytoplasm. The catalysed reaction is 7-aminomethyl-7-carbaguanosine(34) in tRNA + S-adenosyl-L-methionine = epoxyqueuosine(34) in tRNA + adenine + L-methionine + 2 H(+). It functions in the pathway tRNA modification; tRNA-queuosine biosynthesis. Its function is as follows. Transfers and isomerizes the ribose moiety from AdoMet to the 7-aminomethyl group of 7-deazaguanine (preQ1-tRNA) to give epoxyqueuosine (oQ-tRNA). This Shewanella baltica (strain OS155 / ATCC BAA-1091) protein is S-adenosylmethionine:tRNA ribosyltransferase-isomerase.